The primary structure comprises 231 residues: Lipoprotein-releasing system ATP-binding protein LolD (231 aa).

Positions 6–230 constitute an ABC transporter domain; it reads LSCKNVSKKY…DGELELVINS (225 aa). 42–49 provides a ligand contact to ATP; the sequence is GLSGSGKT.

The protein belongs to the ABC transporter superfamily. Lipoprotein translocase (TC 3.A.1.125) family. In terms of assembly, the complex is composed of two ATP-binding proteins (LolD) and two transmembrane proteins (LolC and LolE).

The protein resides in the cell inner membrane. In terms of biological role, part of the ABC transporter complex LolCDE involved in the translocation of mature outer membrane-directed lipoproteins, from the inner membrane to the periplasmic chaperone, LolA. Responsible for the formation of the LolA-lipoprotein complex in an ATP-dependent manner. In Francisella tularensis subsp. tularensis (strain FSC 198), this protein is Lipoprotein-releasing system ATP-binding protein LolD.